The sequence spans 76 residues: Small ribosomal subunit protein bS16 (76 aa).

Belongs to the bacterial ribosomal protein bS16 family.

The chain is Small ribosomal subunit protein bS16 from Helicobacter pylori (strain P12).